We begin with the raw amino-acid sequence, 159 residues long: Ribosomal RNA large subunit methyltransferase H (159 aa).

Residues leucine 76, glycine 108, and 127–132 each bind S-adenosyl-L-methionine; that span reads FSKMTL.

This sequence belongs to the RNA methyltransferase RlmH family. Homodimer.

It localises to the cytoplasm. The catalysed reaction is pseudouridine(1915) in 23S rRNA + S-adenosyl-L-methionine = N(3)-methylpseudouridine(1915) in 23S rRNA + S-adenosyl-L-homocysteine + H(+). Specifically methylates the pseudouridine at position 1915 (m3Psi1915) in 23S rRNA. The polypeptide is Ribosomal RNA large subunit methyltransferase H (Bacillus cytotoxicus (strain DSM 22905 / CIP 110041 / 391-98 / NVH 391-98)).